The sequence spans 174 residues: Crossover junction endodeoxyribonuclease RuvC (174 aa).

Residues Asp-8, Glu-67, and Asp-139 contribute to the active site. Positions 8, 67, and 139 each coordinate Mg(2+).

It belongs to the RuvC family. In terms of assembly, homodimer which binds Holliday junction (HJ) DNA. The HJ becomes 2-fold symmetrical on binding to RuvC with unstacked arms; it has a different conformation from HJ DNA in complex with RuvA. In the full resolvosome a probable DNA-RuvA(4)-RuvB(12)-RuvC(2) complex forms which resolves the HJ. The cofactor is Mg(2+).

Its subcellular location is the cytoplasm. It catalyses the reaction Endonucleolytic cleavage at a junction such as a reciprocal single-stranded crossover between two homologous DNA duplexes (Holliday junction).. The RuvA-RuvB-RuvC complex processes Holliday junction (HJ) DNA during genetic recombination and DNA repair. Endonuclease that resolves HJ intermediates. Cleaves cruciform DNA by making single-stranded nicks across the HJ at symmetrical positions within the homologous arms, yielding a 5'-phosphate and a 3'-hydroxyl group; requires a central core of homology in the junction. The consensus cleavage sequence is 5'-(A/T)TT(C/G)-3'. Cleavage occurs on the 3'-side of the TT dinucleotide at the point of strand exchange. HJ branch migration catalyzed by RuvA-RuvB allows RuvC to scan DNA until it finds its consensus sequence, where it cleaves and resolves the cruciform DNA. In Pseudomonas entomophila (strain L48), this protein is Crossover junction endodeoxyribonuclease RuvC.